The sequence spans 129 residues: MARVKRAVNAQKKRRSILEASSGYRGQRSRLYRKAKEQQLHSLTYAYRDRRARKGDFRKLWITRINAAARANDITYNRLIQGLRLAEIEVDRKNLAELAVSDAAAFAGLVALAKAALPADVNAPAGEAA.

It belongs to the bacterial ribosomal protein bL20 family.

Its function is as follows. Binds directly to 23S ribosomal RNA and is necessary for the in vitro assembly process of the 50S ribosomal subunit. It is not involved in the protein synthesizing functions of that subunit. This is Large ribosomal subunit protein bL20 from Rhodococcus jostii (strain RHA1).